A 140-amino-acid chain; its full sequence is Putative nickel-responsive regulator 2 (140 aa).

Residues histidine 81, histidine 92, histidine 94, and cysteine 100 each coordinate Ni(2+).

The protein belongs to the transcriptional regulatory CopG/NikR family. Ni(2+) is required as a cofactor.

Functionally, transcriptional regulator. In Methanosarcina mazei (strain ATCC BAA-159 / DSM 3647 / Goe1 / Go1 / JCM 11833 / OCM 88) (Methanosarcina frisia), this protein is Putative nickel-responsive regulator 2.